The primary structure comprises 150 residues: Clitocypin (150 aa).

Belongs to the protease inhibitor I48 family. In terms of assembly, homodimer. Uniformly expressed throughout the mature fruiting body (at mRNA and protein level).

Functionally, binds and inhibits cysteine proteinases. Inhibits most strongly papain and cathepsin L, more weakly bromelain and cathepsin B while it is completely ineffective against cathepsin H. The protein is Clitocypin (Cnc1) of Clitocybe nebularis (Clouded agaric).